The primary structure comprises 245 residues: MDENHRNPFANASTSARASGSTSASSNSSFSSSVADTDDDQTIARILAEDESLRREGKLGKRLSHLDSIPHTPRVNREIPDINDATLDHELLSGRLATYGLAELQMEGDGNCQFRALADQLFRNADYHKHVRKHVVKQLKQQRKLYEEYVPMKYRHYTRKMKKHGEWGDHVTLQAAADRFEAKICLVTSFRDQSYIEILPHNKNPLREAWLSFWSEVHYNSLYANGVLALPDVPTRKPRRKHWLF.

The interval 1 to 37 (MDENHRNPFANASTSARASGSTSASSNSSFSSSVADT) is disordered. Positions 10-35 (ANASTSARASGSTSASSNSSFSSSVA) are enriched in low complexity. Residues 101 to 225 (LAELQMEGDG…EVHYNSLYAN (125 aa)) enclose the OTU domain. The active site involves aspartate 109. Cysteine 112 acts as the Nucleophile in catalysis. Residue histidine 218 is part of the active site.

This sequence belongs to the peptidase C85 family.

The enzyme catalyses Thiol-dependent hydrolysis of ester, thioester, amide, peptide and isopeptide bonds formed by the C-terminal Gly of ubiquitin (a 76-residue protein attached to proteins as an intracellular targeting signal).. Functionally, hydrolase that can remove conjugated ubiquitin from proteins in vitro and may therefore play an important regulatory role at the level of protein turnover by preventing degradation. Inactive cysteine protease. This Arabidopsis thaliana (Mouse-ear cress) protein is OVARIAN TUMOR DOMAIN-containing deubiquitinating enzyme 11.